Reading from the N-terminus, the 316-residue chain is Pantothenate kinase (316 aa).

Gly-95–Ser-102 serves as a coordination point for ATP.

The protein belongs to the prokaryotic pantothenate kinase family.

It is found in the cytoplasm. It carries out the reaction (R)-pantothenate + ATP = (R)-4'-phosphopantothenate + ADP + H(+). It participates in cofactor biosynthesis; coenzyme A biosynthesis; CoA from (R)-pantothenate: step 1/5. This Shewanella sp. (strain MR-4) protein is Pantothenate kinase.